Here is a 1713-residue protein sequence, read N- to C-terminus: Serine/threonine-protein kinase MRCK beta (1713 aa).

The region spanning 76–342 (FEIIKVIGRG…IEDFKKHAFF (267 aa)) is the Protein kinase domain. ATP contacts are provided by residues 82-90 (IGRGAFGEV) and lysine 105. The active-site Proton acceptor is aspartate 200. Residues serine 221 and serine 233 each carry the phosphoserine; by autocatalysis modification. Residue threonine 239 is modified to Phosphothreonine; by autocatalysis. In terms of domain architecture, AGC-kinase C-terminal spans 343–413 (EGLNWENIRN…TTESCFSDRG (71 aa)). Phosphothreonine is present on threonine 423. The stretch at 434-649 (LENSLQIEAY…ASKERKLREH (216 aa)) forms a coiled coil. The tract at residues 461–485 (LQESTQTVQSLHGSTRALGNSNRDK) is disordered. A compositionally biased stretch (polar residues) spans 463 to 481 (ESTQTVQSLHGSTRALGNS). Position 671 is an omega-N-methylarginine (arginine 671). Coiled-coil stretches lie at residues 681–815 (QEIS…AHWE) and 882–939 (ALEA…FRAD). Position 927 is a phosphoserine (serine 927). Tyrosine 954 bears the Phosphotyrosine mark. Polar residues-rich tracts occupy residues 971-994 (ASDQETQASKLDLSPSVSVATSTE) and 1001-1014 (RSQQRPSTVPLPNT). A disordered region spans residues 971-1014 (ASDQETQASKLDLSPSVSVATSTEQQEDAARSQQRPSTVPLPNT). The segment at 1026-1076 (AHQFSIKSFPSPTQCSHCTSLMVGLIRQGYACEVCAFSCHVSCKDSAPQVC) adopts a Phorbol-ester/DAG-type zinc-finger fold. Positions 1096 to 1215 (GTAYKGYVKV…WVGILEGLQA (120 aa)) constitute a PH domain. In terms of domain architecture, CNH spans 1241–1515 (IKTVLAAAIV…RPLNSDGSLN (275 aa)). Residues 1585-1598 (ISNPTNFNHVAHMG) form the CRIB domain. A disordered region spans residues 1615-1713 (PTAQEEKQGP…EGLDQPACDA (99 aa)). Over residues 1666 to 1677 (DFDKEPDSDSTK) the composition is skewed to basic and acidic residues. A phosphoserine mark is found at serine 1682, serine 1684, serine 1688, serine 1692, and serine 1695.

It belongs to the protein kinase superfamily. AGC Ser/Thr protein kinase family. DMPK subfamily. Homodimer and homotetramer via the coiled coil regions. Interacts tightly with GTP-bound but not GDP-bound CDC42. Interacts with TJP1; this interaction requires the presence of catalytically active CDC42. Forms a tripartite complex with MYO18A and LURAP1 with the latter acting as an adapter connecting CDC42BPB and MYO18A. LURAP1 binding results in activation of CDC42BPB by abolition of its negative autoregulation. Interacts with STRIP1, STRN3 and SIKE1. Interacts with CPNE4 (via VWFA domain). Interacts with LURAP1. Interacts (via AGC-kinase C-terminal domain) with FAM89B/LRAP25 (via LRR repeat). Forms a tripartite complex with FAM89B/LRAP25 and LIMK1. Requires Mg(2+) as cofactor. Post-translationally, proteolytically cleaved by caspases upon apoptosis induction. As to expression, expressed in all tissues examined with highest levels in lung and kidney.

The protein localises to the cytoplasm. Its subcellular location is the cell membrane. It is found in the cell junction. The protein resides in the cell projection. It localises to the lamellipodium. It catalyses the reaction L-seryl-[protein] + ATP = O-phospho-L-seryl-[protein] + ADP + H(+). The catalysed reaction is L-threonyl-[protein] + ATP = O-phospho-L-threonyl-[protein] + ADP + H(+). With respect to regulation, maintained in an inactive, closed conformation by an interaction between the kinase domain and the negative autoregulatory C-terminal coiled-coil region. Agonist binding to the phorbol ester binding site disrupts this, releasing the kinase domain to allow N-terminus-mediated dimerization and kinase activation by transautophosphorylation. Inhibited by chelerythrine chloride. Serine/threonine-protein kinase which is an important downstream effector of CDC42 and plays a role in the regulation of cytoskeleton reorganization and cell migration. Regulates actin cytoskeletal reorganization via phosphorylation of PPP1R12C and MYL9/MLC2. In concert with MYO18A and LURAP1, is involved in modulating lamellar actomyosin retrograde flow that is crucial to cell protrusion and migration. Phosphorylates PPP1R12A. In concert with FAM89B/LRAP25 mediates the targeting of LIMK1 to the lamellipodium resulting in its activation and subsequent phosphorylation of CFL1 which is important for lamellipodial F-actin regulation. In Rattus norvegicus (Rat), this protein is Serine/threonine-protein kinase MRCK beta.